A 414-amino-acid chain; its full sequence is Esterase FrsA (414 aa).

This sequence belongs to the FrsA family.

The catalysed reaction is a carboxylic ester + H2O = an alcohol + a carboxylate + H(+). Its function is as follows. Catalyzes the hydrolysis of esters. This chain is Esterase FrsA, found in Shigella boydii serotype 18 (strain CDC 3083-94 / BS512).